The primary structure comprises 225 residues: NAD(P)H-quinone oxidoreductase subunit K, chloroplastic (225 aa).

Residues Cys43, Cys44, Cys108, and Cys139 each coordinate [4Fe-4S] cluster.

Belongs to the complex I 20 kDa subunit family. In terms of assembly, NDH is composed of at least 16 different subunits, 5 of which are encoded in the nucleus. Requires [4Fe-4S] cluster as cofactor.

It localises to the plastid. Its subcellular location is the chloroplast thylakoid membrane. The catalysed reaction is a plastoquinone + NADH + (n+1) H(+)(in) = a plastoquinol + NAD(+) + n H(+)(out). It catalyses the reaction a plastoquinone + NADPH + (n+1) H(+)(in) = a plastoquinol + NADP(+) + n H(+)(out). NDH shuttles electrons from NAD(P)H:plastoquinone, via FMN and iron-sulfur (Fe-S) centers, to quinones in the photosynthetic chain and possibly in a chloroplast respiratory chain. The immediate electron acceptor for the enzyme in this species is believed to be plastoquinone. Couples the redox reaction to proton translocation, and thus conserves the redox energy in a proton gradient. This is NAD(P)H-quinone oxidoreductase subunit K, chloroplastic from Gossypium barbadense (Sea Island cotton).